The primary structure comprises 79 residues: Small ribosomal subunit protein bS18B (79 aa).

Belongs to the bacterial ribosomal protein bS18 family. As to quaternary structure, part of the 30S ribosomal subunit. Forms a tight heterodimer with protein bS6.

Binds as a heterodimer with protein bS6 to the central domain of the 16S rRNA, where it helps stabilize the platform of the 30S subunit. This chain is Small ribosomal subunit protein bS18B, found in Saccharopolyspora erythraea (strain ATCC 11635 / DSM 40517 / JCM 4748 / NBRC 13426 / NCIMB 8594 / NRRL 2338).